A 703-amino-acid chain; its full sequence is Methionine--tRNA ligase (703 aa).

Positions 12-22 (PYANGPLHIGH) match the 'HIGH' region motif. 4 residues coordinate Zn(2+): cysteine 143, cysteine 146, cysteine 156, and cysteine 159. A 'KMSKS' region motif is present at residues 331–335 (KMSKT). An ATP-binding site is contributed by lysine 334. 2 stretches are compositionally biased toward low complexity: residues 556-568 (AAPQ…PAKG) and 577-594 (EAPA…AAES). Disordered stretches follow at residues 556-594 (AAPQ…AAES) and 682-703 (GPGG…SEVK). In terms of domain architecture, tRNA-binding spans 602 to 703 (DFAKVVLKAG…GDVAPGSEVK (102 aa)).

This sequence belongs to the class-I aminoacyl-tRNA synthetase family. MetG type 1 subfamily. In terms of assembly, homodimer. It depends on Zn(2+) as a cofactor.

Its subcellular location is the cytoplasm. It carries out the reaction tRNA(Met) + L-methionine + ATP = L-methionyl-tRNA(Met) + AMP + diphosphate. Is required not only for elongation of protein synthesis but also for the initiation of all mRNA translation through initiator tRNA(fMet) aminoacylation. The protein is Methionine--tRNA ligase of Myxococcus xanthus (strain DK1622).